A 255-amino-acid chain; its full sequence is Protein BEAN1 (255 aa).

The chain crosses the membrane as a helical span at residues 37–57 (VLVASAVIGVVITLSCITIIV). Over residues 69-90 (QRHHHRHRRHHHHHRHRRRRHR) the composition is skewed to basic residues. Disordered regions lie at residues 69–109 (QRHH…MPYA) and 160–255 (DAPP…ERIV). Residues 193–206 (QRTQGQSRLHTVSM) are compositionally biased toward polar residues. The segment covering 217–226 (GTGSPSDLLP) has biased composition (low complexity). Residues 234–243 (PSNSQGSPIP) are compositionally biased toward polar residues. Positions 244–255 (TQAPMPSPERIV) are enriched in pro residues.

In terms of assembly, interacts with NEDD4.

The protein resides in the membrane. This chain is Protein BEAN1 (Bean1), found in Mus musculus (Mouse).